Consider the following 788-residue polypeptide: uncharacterized protein (788 aa).

In terms of domain architecture, Adrift-type SAM-dependent 2'-O-MTase spans 485 to 693 (EMITTAWIKL…IYIVLKSYKG (209 aa)). S-adenosyl-L-methionine is bound by residues Gly-521 and Asp-604. The active-site Proton acceptor is the Lys-645.

This is an uncharacterized protein from Acanthamoeba polyphaga (Amoeba).